Consider the following 553-residue polypeptide: Peroxiredoxin-2A (553 aa).

Positions isoleucine 4–serine 160 constitute a Thioredoxin domain. Residue cysteine 51 is the Cysteine sulfenic acid (-SOH) intermediate of the active site. The 46-residue stretch at threonine 156–methionine 201 folds into the F-box domain.

Belongs to the peroxiredoxin family. Prx5 subfamily. Monomer.

It catalyses the reaction [glutaredoxin]-dithiol + a hydroperoxide = [glutaredoxin]-disulfide + an alcohol + H2O. Functionally, thiol-specific peroxidase that catalyzes the reduction of hydrogen peroxide and organic hydroperoxides to water and alcohols, respectively. Plays a role in cell protection against oxidative stress by detoxifying peroxides. May be involved in intracellular redox signaling. In Arabidopsis thaliana (Mouse-ear cress), this protein is Peroxiredoxin-2A (PRXIIA).